Here is an 89-residue protein sequence, read N- to C-terminus: NADH-ubiquinone oxidoreductase chain 4L (89 aa).

Helical transmembrane passes span 1-21 (MNIT…NRKN), 22-42 (IILM…LILV), and 57-77 (IYII…LVAF).

Belongs to the complex I subunit 4L family.

The protein resides in the mitochondrion membrane. The enzyme catalyses a ubiquinone + NADH + 5 H(+)(in) = a ubiquinol + NAD(+) + 4 H(+)(out). In terms of biological role, core subunit of the mitochondrial membrane respiratory chain NADH dehydrogenase (Complex I) that is believed to belong to the minimal assembly required for catalysis. Complex I functions in the transfer of electrons from NADH to the respiratory chain. The immediate electron acceptor for the enzyme is believed to be ubiquinone. In Neurospora crassa (strain ATCC 24698 / 74-OR23-1A / CBS 708.71 / DSM 1257 / FGSC 987), this protein is NADH-ubiquinone oxidoreductase chain 4L (ndh-4L).